The chain runs to 426 residues: Mitogen-activated protein kinase 8 (426 aa).

In terms of domain architecture, Protein kinase spans 26–321 (YQNLKPIGSG…VDDALQHPYI (296 aa)). ATP is bound by residues 33-38 (GSGAQG) and K55. Catalysis depends on D151, which acts as the Proton acceptor. At T183 the chain carries Phosphothreonine. A TXY motif is present at residues 183–185 (TPY). Y185 is subject to Phosphotyrosine. Positions 375–426 (QPAPLGAAVTDGSQAHTSSSSGDASSMSTDPTLPSDTDSSLETSAGTLGCCR) are disordered. Low complexity predominate over residues 384–404 (TDGSQAHTSSSSGDASSMSTD). Residues 405–420 (PTLPSDTDSSLETSAG) are compositionally biased toward polar residues.

The protein belongs to the protein kinase superfamily. CMGC Ser/Thr protein kinase family. MAP kinase subfamily. It depends on Mg(2+) as a cofactor. In terms of processing, dually phosphorylated on Thr-183 and Tyr-185, which activates the enzyme. In terms of tissue distribution, strongly expressed in presumptive ectoderm and mesoderm regions and weakly expressed in endoderm regions during early stages of embryo development. Expressed in the head and dorsal regions during neurula and tailbud stages.

The protein resides in the cytoplasm. Its subcellular location is the nucleus. It is found in the synapse. The catalysed reaction is L-seryl-[protein] + ATP = O-phospho-L-seryl-[protein] + ADP + H(+). The enzyme catalyses L-threonyl-[protein] + ATP = O-phospho-L-threonyl-[protein] + ADP + H(+). Activated by threonine and tyrosine phosphorylation, potentially by the dual-specificity kinase, MKK7. Indirectly activated by Wnt5a. Responds to activation by environmental stress and pro-inflammatory cytokines by phosphorylating a number of transcription factors, and thus regulating transcriptional activity. Regulates morphogenic cell movements, controlling convergent extension during gastrulation. May play a role in the regulation of the circadian clock. The chain is Mitogen-activated protein kinase 8 (mapk8) from Xenopus laevis (African clawed frog).